The primary structure comprises 437 residues: GTPase Obg (437 aa).

One can recognise an Obg domain in the interval 2 to 160; the sequence is SMFLDTAKIK…RNLELELKVL (159 aa). The 178-residue stretch at 161–338 folds into the OBG-type G domain; the sequence is ADVGLVGFPS…LLEATAELLE (178 aa). GTP contacts are provided by residues 167–174, 192–196, 214–217, 284–287, and 319–321; these read GFPSVGKS, FTTIV, DLPG, NKMD, and SGI. Positions 174 and 194 each coordinate Mg(2+). The OCT domain occupies 359–437; that stretch reads GFNPDEPEFA…IGKFEFEFVD (79 aa).

This sequence belongs to the TRAFAC class OBG-HflX-like GTPase superfamily. OBG GTPase family. As to quaternary structure, monomer. Requires Mg(2+) as cofactor.

Its subcellular location is the cytoplasm. In terms of biological role, an essential GTPase which binds GTP, GDP and possibly (p)ppGpp with moderate affinity, with high nucleotide exchange rates and a fairly low GTP hydrolysis rate. Plays a role in control of the cell cycle, stress response, ribosome biogenesis and in those bacteria that undergo differentiation, in morphogenesis control. In Streptococcus suis (strain 98HAH33), this protein is GTPase Obg.